The following is a 123-amino-acid chain: DPEP2 neighbor protein (123 aa).

Residues 67–123 form a disordered region; the sequence is APLATPTKAEAEKPAPRRAPKRRQATIESDKDLGCSSPKIRRLEHRGRRLTPQKLAG. The segment covering 105–117 has biased composition (basic residues); it reads KIRRLEHRGRRLT.

The chain is DPEP2 neighbor protein from Homo sapiens (Human).